Reading from the N-terminus, the 656-residue chain is Threonine--tRNA ligase (656 aa).

Residues 1–64 (MAEAASLTFP…ERSGKIEIIT (64 aa)) form the TGS domain. A catalytic region spans residues 246-548 (DHRRLGREMD…LIENYAGHFP (303 aa)). Residues cysteine 342, histidine 393, and histidine 525 each contribute to the Zn(2+) site.

It belongs to the class-II aminoacyl-tRNA synthetase family. Homodimer. Requires Zn(2+) as cofactor.

It localises to the cytoplasm. It catalyses the reaction tRNA(Thr) + L-threonine + ATP = L-threonyl-tRNA(Thr) + AMP + diphosphate + H(+). Catalyzes the attachment of threonine to tRNA(Thr) in a two-step reaction: L-threonine is first activated by ATP to form Thr-AMP and then transferred to the acceptor end of tRNA(Thr). Also edits incorrectly charged L-seryl-tRNA(Thr). In Chelativorans sp. (strain BNC1), this protein is Threonine--tRNA ligase.